Reading from the N-terminus, the 863-residue chain is Valine--tRNA ligase (863 aa).

The 'HIGH' region motif lies at 43 to 53; it reads PYPTGSFHIGH. Positions 517-521 match the 'KMSKS' region motif; it reads KMSKS. Lys520 serves as a coordination point for ATP.

It belongs to the class-I aminoacyl-tRNA synthetase family. ValS type 2 subfamily.

The protein localises to the cytoplasm. The catalysed reaction is tRNA(Val) + L-valine + ATP = L-valyl-tRNA(Val) + AMP + diphosphate. Catalyzes the attachment of valine to tRNA(Val). As ValRS can inadvertently accommodate and process structurally similar amino acids such as threonine, to avoid such errors, it has a 'posttransfer' editing activity that hydrolyzes mischarged Thr-tRNA(Val) in a tRNA-dependent manner. This Archaeoglobus fulgidus (strain ATCC 49558 / DSM 4304 / JCM 9628 / NBRC 100126 / VC-16) protein is Valine--tRNA ligase.